Here is a 454-residue protein sequence, read N- to C-terminus: Bifunctional protein GlmU (454 aa).

A pyrophosphorylase region spans residues 1–226 (MALNVVILAA…AIEVEGANNR (226 aa)). Residues 8 to 11 (LAAG), K22, Q73, 78 to 79 (GT), 100 to 102 (YGD), G137, E151, N166, and N224 each bind UDP-N-acetyl-alpha-D-glucosamine. D102 provides a ligand contact to Mg(2+). Position 224 (N224) interacts with Mg(2+). The interval 227-247 (VQLAQLERAYQAREAEKLMIA) is linker. The tract at residues 248 to 454 (GANLRDPSRI…GWQRPVKIKE (207 aa)) is N-acetyltransferase. UDP-N-acetyl-alpha-D-glucosamine is bound by residues R330 and K348. The Proton acceptor role is filled by H360. UDP-N-acetyl-alpha-D-glucosamine contacts are provided by Y363 and N374. Acetyl-CoA is bound by residues A377, 383–384 (NY), S402, A420, and R437.

The protein in the N-terminal section; belongs to the N-acetylglucosamine-1-phosphate uridyltransferase family. In the C-terminal section; belongs to the transferase hexapeptide repeat family. As to quaternary structure, homotrimer. Requires Mg(2+) as cofactor.

The protein localises to the cytoplasm. It carries out the reaction alpha-D-glucosamine 1-phosphate + acetyl-CoA = N-acetyl-alpha-D-glucosamine 1-phosphate + CoA + H(+). The enzyme catalyses N-acetyl-alpha-D-glucosamine 1-phosphate + UTP + H(+) = UDP-N-acetyl-alpha-D-glucosamine + diphosphate. It functions in the pathway nucleotide-sugar biosynthesis; UDP-N-acetyl-alpha-D-glucosamine biosynthesis; N-acetyl-alpha-D-glucosamine 1-phosphate from alpha-D-glucosamine 6-phosphate (route II): step 2/2. The protein operates within nucleotide-sugar biosynthesis; UDP-N-acetyl-alpha-D-glucosamine biosynthesis; UDP-N-acetyl-alpha-D-glucosamine from N-acetyl-alpha-D-glucosamine 1-phosphate: step 1/1. Its pathway is bacterial outer membrane biogenesis; LPS lipid A biosynthesis. Functionally, catalyzes the last two sequential reactions in the de novo biosynthetic pathway for UDP-N-acetylglucosamine (UDP-GlcNAc). The C-terminal domain catalyzes the transfer of acetyl group from acetyl coenzyme A to glucosamine-1-phosphate (GlcN-1-P) to produce N-acetylglucosamine-1-phosphate (GlcNAc-1-P), which is converted into UDP-GlcNAc by the transfer of uridine 5-monophosphate (from uridine 5-triphosphate), a reaction catalyzed by the N-terminal domain. The protein is Bifunctional protein GlmU of Shewanella sp. (strain MR-7).